A 64-amino-acid polypeptide reads, in one-letter code: Neurotoxin lambda-MeuTx (64 aa).

A signal peptide spans 1–18 (MSTFIVVFLLLTAILCHA). A propeptide spanning residues 19–27 (EHAIDETAR) is cleaved from the precursor. Disulfide bonds link Cys29-Cys43, Cys36-Cys49, and Cys42-Cys58.

The protein belongs to the scorpion calcin-like family. Expressed by the venom gland.

It localises to the secreted. Its function is as follows. Voltage-gated potassium channel (Kv) inhibitor. In addition it may increase intracellular calcium release through the activation of nuclear inositol 1,4,5-trisphosphate receptors (ITPR) of cardiomyocytes, thereby causing an increase in the contraction frequency of these cells. This Mesobuthus eupeus (Lesser Asian scorpion) protein is Neurotoxin lambda-MeuTx.